A 507-amino-acid polypeptide reads, in one-letter code: 2,3-bisphosphoglycerate-independent phosphoglycerate mutase (507 aa).

Mn(2+) is bound by residues D13 and S63. Residue S63 is the Phosphoserine intermediate of the active site. Substrate-binding positions include H122, 152–153, R184, R190, 256–259, and K330; these read RD and RADR. D397, H401, D438, H439, and H457 together coordinate Mn(2+).

This sequence belongs to the BPG-independent phosphoglycerate mutase family. In terms of assembly, monomer. Requires Mn(2+) as cofactor.

The catalysed reaction is (2R)-2-phosphoglycerate = (2R)-3-phosphoglycerate. The protein operates within carbohydrate degradation; glycolysis; pyruvate from D-glyceraldehyde 3-phosphate: step 3/5. Functionally, catalyzes the interconversion of 2-phosphoglycerate and 3-phosphoglycerate. This is 2,3-bisphosphoglycerate-independent phosphoglycerate mutase from Chromobacterium violaceum (strain ATCC 12472 / DSM 30191 / JCM 1249 / CCUG 213 / NBRC 12614 / NCIMB 9131 / NCTC 9757 / MK).